A 126-amino-acid chain; its full sequence is Histone H2B 8 (126 aa).

The segment covering 1 to 12 (MPEPAKSAPAPK) has biased composition (low complexity). The tract at residues 1 to 35 (MPEPAKSAPAPKKGSKKAVTKTQKKGDKKRRKTRK) is disordered. N6-acetyllysine occurs at positions 6 and 13. A compositionally biased stretch (basic residues) spans 13–34 (KGSKKAVTKTQKKGDKKRRKTR). Position 15 is a phosphoserine (S15). An N6-acetyllysine mark is found at K16 and K21. The O-linked (GlcNAc) serine glycan is linked to S113. Residue K121 forms a Glycyl lysine isopeptide (Lys-Gly) (interchain with G-Cter in ubiquitin) linkage.

Belongs to the histone H2B family. As to quaternary structure, the nucleosome is a histone octamer containing two molecules each of H2A, H2B, H3 and H4 assembled in one H3-H4 heterotetramer and two H2A-H2B heterodimers. The octamer wraps approximately 147 bp of DNA. Monoubiquitination of Lys-121 by the BRE1 gives a specific tag for epigenetic transcriptional activation and is also prerequisite for histone H3 'Lys-4' and 'Lys-79' methylation. In terms of processing, phosphorylated on Ser-15 during apoptosis; which facilitates apoptotic chromatin condensation. Post-translationally, glcNAcylation at Ser-113 promotes monoubiquitination of Lys-121. It fluctuates in response to extracellular glucose, and associates with transcribed genes.

Its subcellular location is the nucleus. It is found in the chromosome. In terms of biological role, core component of nucleosome. Nucleosomes wrap and compact DNA into chromatin, limiting DNA accessibility to the cellular machineries which require DNA as a template. Histones thereby play a central role in transcription regulation, DNA repair, DNA replication and chromosomal stability. DNA accessibility is regulated via a complex set of post-translational modifications of histones, also called histone code, and nucleosome remodeling. The protein is Histone H2B 8 (H2B-VIII) of Gallus gallus (Chicken).